The chain runs to 436 residues: GDP-mannose 6-dehydrogenase (436 aa).

6 residues coordinate NAD(+): Tyr-10, Val-11, Asp-30, Lys-35, Thr-86, and Thr-124. Residues Glu-161, Lys-210, Asn-214, His-217, Asn-225, Tyr-256, Tyr-257, Arg-259, Phe-262, and Gly-265 each coordinate GDP-alpha-D-mannuronate. The active-site Nucleophile is the Cys-268. NAD(+) is bound at residue Lys-271. An inter-domain linker region spans residues 278 to 295 (YRASQLDVEHPMLGSLMR). Lys-324 lines the GDP-alpha-D-mannuronate pocket. Arg-331 is a binding site for NAD(+).

Belongs to the UDP-glucose/GDP-mannose dehydrogenase family. As to quaternary structure, forms a domain-swapped dimer with each peptide contributing to each active site. The dimers assemble further. X-ray structures indicate this enzyme exists as a homotetramer PubMed:12705829, but kinetic and physical results obtained in PubMed:2470755 and PubMed:12135385 indicate that it is probably a homohexamer.

The enzyme catalyses GDP-alpha-D-mannose + 2 NAD(+) + H2O = GDP-alpha-D-mannuronate + 2 NADH + 3 H(+). It functions in the pathway glycan biosynthesis; alginate biosynthesis. Its activity is regulated as follows. Inhibited by GMP, ATP, GDP-D-glucose and maltose. Inhibited by GMP and deamidoNAD. In terms of biological role, catalyzes the oxidation of guanosine diphospho-D-mannose (GDP-D-mannose) to GDP-D-mannuronic acid, a precursor for alginate polymerization. The alginate layer causes a mucoid phenotype and provides a protective barrier against host immune defenses and antibiotics. Other sugars are not used as substrates. The sequence is that of GDP-mannose 6-dehydrogenase from Pseudomonas aeruginosa (strain ATCC 15692 / DSM 22644 / CIP 104116 / JCM 14847 / LMG 12228 / 1C / PRS 101 / PAO1).